The following is a 60-amino-acid chain: Large ribosomal subunit protein uL30 (60 aa).

Belongs to the universal ribosomal protein uL30 family. As to quaternary structure, part of the 50S ribosomal subunit.

The protein is Large ribosomal subunit protein uL30 of Acidothermus cellulolyticus (strain ATCC 43068 / DSM 8971 / 11B).